We begin with the raw amino-acid sequence, 105 residues long: Large ribosomal subunit protein P2 (105 aa).

This sequence belongs to the eukaryotic ribosomal protein P1/P2 family. As to quaternary structure, P1 and P2 exist as dimers at the large ribosomal subunit. In terms of processing, phosphorylated.

Functionally, plays an important role in the elongation step of protein synthesis. This is Large ribosomal subunit protein P2 (LIP2) from Leishmania braziliensis.